Reading from the N-terminus, the 269-residue chain is Propanediol uptake facilitator PduF (269 aa).

A run of 2 helical transmembrane segments spans residues Ile-10 to Leu-30 and Ile-42 to Gly-62. Residues Asn-66–Ala-68 carry the NPA 1 motif. A run of 3 helical transmembrane segments spans residues Ile-69–Val-89, Val-143–Ala-163, and Leu-179–Ala-199. Positions Asn-201–Ala-203 match the NPA 2 motif. The chain crosses the membrane as a helical span at residues Ile-228 to Ile-248.

This sequence belongs to the MIP/aquaporin (TC 1.A.8) family.

It localises to the cell inner membrane. Its function is as follows. Probably facilitates diffusion of 1,2-propanediol (1,2-PD) into the cell. This is Propanediol uptake facilitator PduF from Citrobacter freundii.